The following is a 529-amino-acid chain: ATP synthase subunit alpha (529 aa).

Residue 173–180 (GDRQTGKT) coordinates ATP.

This sequence belongs to the ATPase alpha/beta chains family. F-type ATPases have 2 components, CF(1) - the catalytic core - and CF(0) - the membrane proton channel. CF(1) has five subunits: alpha(3), beta(3), gamma(1), delta(1), epsilon(1). CF(0) has three main subunits: a(1), b(2) and c(9-12). The alpha and beta chains form an alternating ring which encloses part of the gamma chain. CF(1) is attached to CF(0) by a central stalk formed by the gamma and epsilon chains, while a peripheral stalk is formed by the delta and b chains.

Its subcellular location is the cell membrane. It catalyses the reaction ATP + H2O + 4 H(+)(in) = ADP + phosphate + 5 H(+)(out). Functionally, produces ATP from ADP in the presence of a proton gradient across the membrane. The alpha chain is a regulatory subunit. The protein is ATP synthase subunit alpha of Streptomyces lividans.